The following is a 159-amino-acid chain: Transcription elongation factor GreA (159 aa).

The protein belongs to the GreA/GreB family.

In terms of biological role, necessary for efficient RNA polymerase transcription elongation past template-encoded arresting sites. The arresting sites in DNA have the property of trapping a certain fraction of elongating RNA polymerases that pass through, resulting in locked ternary complexes. Cleavage of the nascent transcript by cleavage factors such as GreA or GreB allows the resumption of elongation from the new 3'terminus. GreA releases sequences of 2 to 3 nucleotides. The chain is Transcription elongation factor GreA from Buchnera aphidicola subsp. Baizongia pistaciae (strain Bp).